The following is a 347-amino-acid chain: Farnesyl pyrophosphate synthase (347 aa).

Isopentenyl diphosphate is bound by residues Lys-50, Arg-53, and Gln-88. 2 residues coordinate Mg(2+): Asp-95 and Asp-99. Residue Arg-104 coordinates dimethylallyl diphosphate. Arg-105 provides a ligand contact to isopentenyl diphosphate. The dimethylallyl diphosphate site is built by Lys-192, Thr-193, Gln-232, Lys-249, and Lys-258.

The protein belongs to the FPP/GGPP synthase family. In terms of assembly, interacts with spo9. The cofactor is Mg(2+).

Its subcellular location is the cytoplasm. The protein localises to the nucleus. The catalysed reaction is isopentenyl diphosphate + dimethylallyl diphosphate = (2E)-geranyl diphosphate + diphosphate. It catalyses the reaction isopentenyl diphosphate + (2E)-geranyl diphosphate = (2E,6E)-farnesyl diphosphate + diphosphate. Its pathway is isoprenoid biosynthesis; farnesyl diphosphate biosynthesis; farnesyl diphosphate from geranyl diphosphate and isopentenyl diphosphate: step 1/1. The protein operates within isoprenoid biosynthesis; geranyl diphosphate biosynthesis; geranyl diphosphate from dimethylallyl diphosphate and isopentenyl diphosphate: step 1/1. Its function is as follows. Farnesyl pyrophosphate synthase; part of the second module of ergosterol biosynthesis pathway that includes the middle steps of the pathway. Fps1 catalyzes the sequential condensation of isopentenyl pyrophosphate with dimethylallyl pyrophosphate, and then with the resultant geranylpyrophosphate to the ultimate product farnesyl pyrophosphate. The second module is carried out in the vacuole and involves the formation of farnesyl diphosphate, which is also an important intermediate in the biosynthesis of ubiquinone, dolichol, heme and prenylated proteins. Activity by the mevalonate kinase erg12 first converts mevalonate into 5-phosphomevalonate. 5-phosphomevalonate is then further converted to 5-diphosphomevalonate by the phosphomevalonate kinase erg8. The diphosphomevalonate decarboxylase mvd1 then produces isopentenyl diphosphate. The isopentenyl-diphosphate delta-isomerase idi1 then catalyzes the 1,3-allylic rearrangement of the homoallylic substrate isopentenyl (IPP) to its highly electrophilic allylic isomer, dimethylallyl diphosphate (DMAPP). Finally the farnesyl diphosphate synthase fps1 catalyzes the sequential condensation of isopentenyl pyrophosphate with dimethylallyl pyrophosphate, and then with the resultant geranylpyrophosphate to the ultimate product farnesyl pyrophosphate. This Schizosaccharomyces pombe (strain 972 / ATCC 24843) (Fission yeast) protein is Farnesyl pyrophosphate synthase.